A 176-amino-acid chain; its full sequence is MPDLQAGQRPAFVAMLPWLVLAAAVMGLDQLTKQVVLATMQYGEVIPVTGFFDLVLVFNRGAAFSFLAEHSGWQRWFFTGLAVVICGWLLALMHQHREERLLPAAFALIIGGAIGNVVDRLLHGAVVDFLYFHAGRYGWPAFNLADSAITLGVGLMLWAQLRAGKHKPEAGPERPS.

4 consecutive transmembrane segments (helical) span residues 11-31 (AFVA…LDQL), 38-58 (ATMQ…VLVF), 76-96 (WFFT…MHQH), and 101-121 (LLPA…VDRL). Catalysis depends on residues Asp-128 and Asp-146. A helical membrane pass occupies residues 139–159 (WPAFNLADSAITLGVGLMLWA).

This sequence belongs to the peptidase A8 family.

The protein resides in the cell inner membrane. It carries out the reaction Release of signal peptides from bacterial membrane prolipoproteins. Hydrolyzes -Xaa-Yaa-Zaa-|-(S,diacylglyceryl)Cys-, in which Xaa is hydrophobic (preferably Leu), and Yaa (Ala or Ser) and Zaa (Gly or Ala) have small, neutral side chains.. It participates in protein modification; lipoprotein biosynthesis (signal peptide cleavage). In terms of biological role, this protein specifically catalyzes the removal of signal peptides from prolipoproteins. This Azoarcus sp. (strain BH72) protein is Lipoprotein signal peptidase.